A 324-amino-acid polypeptide reads, in one-letter code: MAYTKISDVIVPELFNPYVINTTTQLSAFFQSGIAATDDELNALAKKAGGGSTLNMPYWNDLDGDSQVLNDTDDLVPQKINAGQDKAVLILRGNAWSSHDLAATLSGSDPMQAIGSRVAAYWAREMQKIVFAELAGVFSNDDMKDNKLDISGTADGIYSAETFVDASYKLGDHESLLTAIGMHSATMASAVKQDLIEFVKDSQSGIRFPTYMNKRVIVDDSMPVETLEDGTKVFTSYLFGAGALGYAEGQPEVPTETARNALGSQDILINRKHFVLHPRGVKFTENAMAGTTPTDEELANGANWQRVYDPKKIRIVQFKHRLQA.

This sequence belongs to the lambda phage major capsid protein family. As to quaternary structure, interacts with the scaffolding protein gp11. Interacts with the decoration protein gp12.

It is found in the virion. Its function is as follows. Capsid protein self-assembles, with the help of the scaffolding protein gp11, to form an icosahedral capsid with a T=7 symmetry, about 61 nm in diameter. The capsid encapsulates the genomic DNA. The polypeptide is Major capsid protein (Bacillus subtilis (Bacteriophage SPP1)).